We begin with the raw amino-acid sequence, 2449 residues long: Nonribisomal peptide synthetase phqB (2449 aa).

The adenylation 1 stretch occupies residues 253–654 (IQVHSGPGRL…GRRDTVVKIR (402 aa)). The region spanning 795–870 (LPMTPNEDVL…LRTVAKEARP (76 aa)) is the Carrier 1 domain. Ser-815 bears the O-(pantetheine 4'-phosphoryl)serine mark. The segment at 913–1337 (QDIYPTTPLQ…LISDRDSELL (425 aa)) is condensation 1. Residues 1357-1756 (EAQVTRNPSK…TFTFLGRTNQ (400 aa)) are adenylation 2. In terms of domain architecture, Carrier 2 spans 1915–1993 (WALSKHIGQL…MVAEMIDRTP (79 aa)). Ser-1952 is subject to O-(pantetheine 4'-phosphoryl)serine. The interval 2041-2297 (LTGATGFLGT…VAAVDWVASL (257 aa)) is reductase (R) domain. The NADPH site is built by Thr-2045, Met-2249, and Asn-2259.

Belongs to the NRP synthetase family.

It participates in alkaloid biosynthesis. Its function is as follows. Nonribisomal peptide synthetase; part of the gene cluster that mediates the biosynthesis of paraherquamide, a fungal indole alkaloid that belongs to a family of natural products containing a characteristic bicyclo[2.2.2]diazaoctane core. The first steps in the biosynthesis of paraherquamide is the production of the beta-methyl-proline precursor from L-isoleucine. They require oxidation of a terminally hydroxylated L-isoleucine to the corresponding aldehyde by enzymes which have still to be identified. Spontaneous cyclization and dehydration would yield the 4-methyl pyrolline-5-carboxylic acid, which is then reduced by the pyrroline-5-carboxylate reductase phqD leading to the beta-methyl-proline precursor. The next step of paraherquamide biosynthesis involves coupling of beta-methyl-proline and L-tryptophan by the bimodular NRPS phqB, to produce a monooxopiperazine intermediate. The reductase (R) domain of phqB utilizes NADPH for hydride transfer to reduce the thioester bond of the T domain-tethered linear dipeptide to a hemithioaminal intermediate, which spontaneously cleaves the C-S bond to release the aldehyde product. This compound undergoes spontaneous cyclization and dehydration to give a dienamine which is reverse prenylated at C-2 by the reverse prenyltransferase phqJ. The other prenyltransferase present in the cluster, phqI may be a redundant gene in the pathway. During biosynthetic assembly, the key step to produce the polycyclic core is catalyzed by the bifunctional reductase and intramolecular [4+2] Diels-Alderase, phqE, resulting in formation of the [2.2.2] diazaoctane intermediate preparaherquamide. Following formation of preparaherquamide, an indole 2,3-epoxidation-initiated pinacol-like rearrangement is catalyzed by the phqK FAD-dependent monooxygenase. The prenyltransferase phqA, the cytochrome P450 monooxygenase phqL, and the FAD-linked oxidoreductase phqH (or the cytochrome P450 monooxygenase phqM), are proposed to be involved in the formation of the pyran ring. The FAD-dependent monooxygenase phqK is likely responsible for generation of the spiro-oxindole, and the N-methylation is likely mediated by the phqN methyltransferase leading to the isolable natural product paraherquamide F. However, the order of these biosynthetic steps has still to be determined. In late-stage paraherquamide biosynthesis, the third P450 monooxygenase, phqO, is probably responsible for the C-14 hydroxylation, transforming paraherquamide F to paraherquamide G, and paraherquamide E to the final product paraherquamide A. The expansion from the 6-membered ring pyran (in paraherquamides F and G) to the 7-membered dioxepin ring (in paraherquamides A and E) represents a poorly understood but intriguing process that probably involves the 2-oxoglutarate-dependent dioxygenase phqC. Finally, the remaining members of the paraherquamide cluster, including phqI as well as phqM (or phqH), do not have a clearly prescribed role and appear to be redundant. This chain is Nonribisomal peptide synthetase phqB, found in Penicillium fellutanum.